A 338-amino-acid chain; its full sequence is Heat-inducible transcription repressor HrcA (338 aa).

Belongs to the HrcA family.

Its function is as follows. Negative regulator of class I heat shock genes (grpE-dnaK-dnaJ and groELS operons). Prevents heat-shock induction of these operons. The chain is Heat-inducible transcription repressor HrcA from Bacillus cereus (strain AH187).